We begin with the raw amino-acid sequence, 192 residues long: Lipid A acyltransferase PagP (192 aa).

The signal sequence occupies residues 1 to 29 (MVVNVVIVAKKYFLFITLLIIQVSLPAHA). Residues His64, Asp107, and Ser108 contribute to the active site.

Belongs to the lipid A palmitoyltransferase family. As to quaternary structure, homodimer.

It is found in the cell outer membrane. The enzyme catalyses a lipid A + a 1,2-diacyl-sn-glycero-3-phosphocholine = a hepta-acyl lipid A + a 2-acyl-sn-glycero-3-phosphocholine. The catalysed reaction is a lipid IVA + a 1,2-diacyl-sn-glycero-3-phosphocholine = a lipid IVB + a 2-acyl-sn-glycero-3-phosphocholine. It carries out the reaction a lipid IIA + a 1,2-diacyl-sn-glycero-3-phosphocholine = a lipid IIB + a 2-acyl-sn-glycero-3-phosphocholine. Transfers a fatty acid residue from the sn-1 position of a phospholipid to the N-linked hydroxyfatty acid chain on the proximal unit of lipid A or its precursors. This Citrobacter rodentium (strain ICC168) (Citrobacter freundii biotype 4280) protein is Lipid A acyltransferase PagP.